Here is a 274-residue protein sequence, read N- to C-terminus: 3-methyl-2-oxobutanoate hydroxymethyltransferase (274 aa).

Positions 49 and 88 each coordinate Mg(2+). 3-methyl-2-oxobutanoate-binding positions include D49–S50, D88, and K118. Residue E120 coordinates Mg(2+). E187 (proton acceptor) is an active-site residue.

Belongs to the PanB family. Homodecamer; pentamer of dimers. Mg(2+) serves as cofactor.

It is found in the cytoplasm. It catalyses the reaction 3-methyl-2-oxobutanoate + (6R)-5,10-methylene-5,6,7,8-tetrahydrofolate + H2O = 2-dehydropantoate + (6S)-5,6,7,8-tetrahydrofolate. The protein operates within cofactor biosynthesis; (R)-pantothenate biosynthesis; (R)-pantoate from 3-methyl-2-oxobutanoate: step 1/2. Catalyzes the reversible reaction in which hydroxymethyl group from 5,10-methylenetetrahydrofolate is transferred onto alpha-ketoisovalerate to form ketopantoate. This is 3-methyl-2-oxobutanoate hydroxymethyltransferase from Rhodopseudomonas palustris (strain HaA2).